Here is a 241-residue protein sequence, read N- to C-terminus: VKSTNLMAFVATKMLERQEDLDTCTEMQVEKMKTSTKARLRTESSFAPRTWEDAIKDGELLFNGTILQAESPTMTPASVEMKGKKFPIDFAPSNIAPIGQNPIYLSPCIPNFDGNVWEATMYHHRGATLTKTMNCNCFQRTIWCHPNPSRMRLSYAFVLYCRNTKKICGYLIARQVAGIETGIRKCFRCIKSGFVMATDEISLTILQSIKSGAQLDPYWGNETPDIDKTEAYMLSLREAGP.

The protein localises to the host cytoplasm. It is found in the host nucleus. Suppresses the RNA silencing-based antiviral response in Drosophila cells. This chain is Non-structural protein 1 (NS), found in Influenza C virus (strain C/Johannesburg/1/1966).